A 543-amino-acid chain; its full sequence is MATSLSADSPQQLSSLSTQQTTLLLLFSVLAAVHLGQWLLRQWQRKPWSSPPGPFPWPLIGNAAAVGQASHLYFARLARRYGDVFQIRLGSCPVVVLNGESAIHQALVQQGSIFADRPPFASFRVVSGGRSLAFGHYSEHWKTQRRSAYSTMRAFSTRHPRSRGLLEGHALAEARELVAVLVRRCAGGAFLDPTQPVIVAVANVMSAVCFGCRYNHDDAEFLELLSHNEEFGRTVGAGSLVDVLPWLQLFPNPVRTTFRKFEQLNRNFSNFVLDKFLRHRESLVPGAAPRDMTDAFILSAEKKASGAPGDDSSGLDLEDVPATITDIFGASQDTLSTALLWLLILFTRYPDVQARVQAELDQVVGRDRLPCMSDQPNLPYVMAFLYESMRFSSFLPVTIPHATTANTFVLGYYIPKNTVVFVNQWSVNHDPAKWPNPEDFDPARFLDKDGFINKALASSVMIFSVGKRRCIGEELSKMLLFLFISILAHQCNFKANQNESSNMSFSYGLTIKPKSFRIHVSLRESMELLDNAVKKLQTEEGCK.

Position 470 (C470) interacts with heme.

Belongs to the cytochrome P450 family. The cofactor is heme. Constitutively expressed in retinal and kidney pericytes cells. Expressed in retinal endothelial cells (at protein level). Expressed in cardiac, pulmonary and aortic endothelial cells. Constitutively expressed in trabecular meshwork of the eye (at protein level).

It is found in the endoplasmic reticulum membrane. The protein localises to the microsome membrane. It localises to the mitochondrion. It catalyses the reaction an organic molecule + reduced [NADPH--hemoprotein reductase] + O2 = an alcohol + oxidized [NADPH--hemoprotein reductase] + H2O + H(+). It carries out the reaction 17beta-estradiol + reduced [NADPH--hemoprotein reductase] + O2 = 2-hydroxy-17beta-estradiol + oxidized [NADPH--hemoprotein reductase] + H2O + H(+). The enzyme catalyses 17beta-estradiol + reduced [NADPH--hemoprotein reductase] + O2 = 4-hydroxy-17beta-estradiol + oxidized [NADPH--hemoprotein reductase] + H2O + H(+). The catalysed reaction is estrone + reduced [NADPH--hemoprotein reductase] + O2 = 2-hydroxyestrone + oxidized [NADPH--hemoprotein reductase] + H2O + H(+). It catalyses the reaction estrone + reduced [NADPH--hemoprotein reductase] + O2 = 4-hydroxyestrone + oxidized [NADPH--hemoprotein reductase] + H2O + H(+). It carries out the reaction testosterone + reduced [NADPH--hemoprotein reductase] + O2 = 6beta,17beta-dihydroxyandrost-4-en-3-one + oxidized [NADPH--hemoprotein reductase] + H2O + H(+). The enzyme catalyses progesterone + reduced [NADPH--hemoprotein reductase] + O2 = 6beta-hydroxyprogesterone + oxidized [NADPH--hemoprotein reductase] + H2O + H(+). The catalysed reaction is progesterone + reduced [NADPH--hemoprotein reductase] + O2 = 16alpha-hydroxyprogesterone + oxidized [NADPH--hemoprotein reductase] + H2O + H(+). It catalyses the reaction all-trans-retinol + reduced [NADPH--hemoprotein reductase] + O2 = all-trans-retinal + oxidized [NADPH--hemoprotein reductase] + 2 H2O + H(+). It carries out the reaction all-trans-retinal + reduced [NADPH--hemoprotein reductase] + O2 = all-trans-retinoate + oxidized [NADPH--hemoprotein reductase] + H2O + 2 H(+). The enzyme catalyses (5Z,8Z,11Z,14Z)-eicosatetraenoate + reduced [NADPH--hemoprotein reductase] + O2 = (8R,9S)-epoxy-(5Z,11Z,14Z)-eicosatrienoate + oxidized [NADPH--hemoprotein reductase] + H2O + H(+). The catalysed reaction is (5Z,8Z,11Z,14Z)-eicosatetraenoate + reduced [NADPH--hemoprotein reductase] + O2 = (11R,12S)-epoxy-(5Z,8Z,14Z)-eicosatrienoate + oxidized [NADPH--hemoprotein reductase] + H2O + H(+). It catalyses the reaction (5Z,8Z,11Z,14Z)-eicosatetraenoate + reduced [NADPH--hemoprotein reductase] + O2 = (11S,12R)-epoxy-(5Z,8Z,14Z)-eicosatrienoate + oxidized [NADPH--hemoprotein reductase] + H2O + H(+). It carries out the reaction (5Z,8Z,11Z,14Z)-eicosatetraenoate + reduced [NADPH--hemoprotein reductase] + O2 = (14R,15S)-epoxy-(5Z,8Z,11Z)-eicosatrienoate + oxidized [NADPH--hemoprotein reductase] + H2O + H(+). The enzyme catalyses (5S)-hydroperoxy-(6E,8Z,11Z,14Z)-eicosatetraenoate = 5-oxo-(6E,8Z,11Z,14Z)-eicosatetraenoate + H2O. The catalysed reaction is (12S)-hydroperoxy-(5Z,8Z,10E,14Z)-eicosatetraenoate = 12-oxo-(5Z,8Z,10E,14Z)-eicosatetraenoate + H2O. It catalyses the reaction (13S)-hydroperoxy-(9Z,11E)-octadecadienoate = 13-oxo-(9Z,11E)-octadecadienoate + H2O. It carries out the reaction (15S)-hydroperoxy-(5Z,8Z,11Z,13E)-eicosatetraenoate = 15-oxo-(5Z,8Z,11Z,13E)-eicosatetraenoate + H2O. It participates in steroid hormone biosynthesis. The protein operates within cofactor metabolism; retinol metabolism. It functions in the pathway lipid metabolism; arachidonate metabolism. Enzyme activity is increased by cytochrome b5. Enzyme activity is increased by liposomes containing anionic phospholipids, phosphatidic acid and cardiolipin. Inhibited by naringenin with an IC(50) of 5 uM. Functionally, a cytochrome P450 monooxygenase involved in the metabolism of various endogenous substrates, including fatty acids, steroid hormones and vitamins. Mechanistically, uses molecular oxygen inserting one oxygen atom into a substrate, and reducing the second into a water molecule, with two electrons provided by NADPH via cytochrome P450 reductase (NADPH--hemoprotein reductase). Exhibits catalytic activity for the formation of hydroxyestrogens from 17beta-estradiol (E2), namely 2- and 4-hydroxy E2. Metabolizes testosterone and progesterone to B or D ring hydroxylated metabolites. May act as a major enzyme for all-trans retinoic acid biosynthesis in extrahepatic tissues. Catalyzes two successive oxidative transformation of all-trans retinol to all-trans retinal and then to the active form all-trans retinoic acid. Catalyzes the epoxidation of double bonds of certain PUFA. Converts arachidonic acid toward epoxyeicosatrienoic acid (EpETrE) regioisomers, 8,9-, 11,12-, and 14,15- EpETrE, that function as lipid mediators in the vascular system. Additionally, displays dehydratase activity toward oxygenated eicosanoids hydroperoxyeicosatetraenoates (HpETEs). This activity is independent of cytochrome P450 reductase, NADPH, and O2. Also involved in the oxidative metabolism of xenobiotics, particularly converting polycyclic aromatic hydrocarbons and heterocyclic aryl amines procarcinogens to DNA-damaging products. Plays an important role in retinal vascular development. Under ambient/hyperoxic O2 conditions, promotes angiogenesis and capillary morphogenesis of retinal endothelial cells and pericytes, likely by metabolizing the oxygenated products symptomatic of oxidative stress. Also, contributes to oxidative homeostasis and ultrastructural organization and function of trabecular meshwork tissue through modulation of POSTN expression. The sequence is that of Cytochrome P450 1B1 from Mus musculus (Mouse).